The sequence spans 527 residues: Glutamate--cysteine ligase (527 aa).

This sequence belongs to the glutamate--cysteine ligase type 1 family. Type 1 subfamily.

It carries out the reaction L-cysteine + L-glutamate + ATP = gamma-L-glutamyl-L-cysteine + ADP + phosphate + H(+). It participates in sulfur metabolism; glutathione biosynthesis; glutathione from L-cysteine and L-glutamate: step 1/2. The sequence is that of Glutamate--cysteine ligase from Pseudomonas aeruginosa (strain UCBPP-PA14).